Here is a 389-residue protein sequence, read N- to C-terminus: PqqA peptide cyclase (389 aa).

In terms of domain architecture, Radical SAM core spans 19 to 234 (VGLPLWLLAE…TNEYRARLEA (216 aa)). Residues C33, C37, and C40 each coordinate [4Fe-4S] cluster.

Belongs to the radical SAM superfamily. PqqE family. In terms of assembly, interacts with PqqD. The interaction is necessary for activity of PqqE. The cofactor is [4Fe-4S] cluster.

It catalyses the reaction [PQQ precursor protein] + S-adenosyl-L-methionine = E-Y cross-linked-[PQQ precursor protein] + 5'-deoxyadenosine + L-methionine + H(+). The protein operates within cofactor biosynthesis; pyrroloquinoline quinone biosynthesis. In terms of biological role, catalyzes the cross-linking of a glutamate residue and a tyrosine residue in the PqqA protein as part of the biosynthesis of pyrroloquinoline quinone (PQQ). This Pseudomonas syringae pv. syringae (strain B728a) protein is PqqA peptide cyclase.